Consider the following 532-residue polypeptide: Arginine--tRNA ligase (532 aa).

The 'HIGH' region signature appears at 122-132 (ANPTGPLHVAS).

The protein belongs to the class-I aminoacyl-tRNA synthetase family. As to quaternary structure, monomer.

It localises to the cytoplasm. It carries out the reaction tRNA(Arg) + L-arginine + ATP = L-arginyl-tRNA(Arg) + AMP + diphosphate. This Elusimicrobium minutum (strain Pei191) protein is Arginine--tRNA ligase.